We begin with the raw amino-acid sequence, 152 residues long: UPF0225 protein YchJ (152 aa).

Belongs to the UPF0225 family.

This is UPF0225 protein YchJ from Escherichia coli O7:K1 (strain IAI39 / ExPEC).